The chain runs to 353 residues: Fe(3+) ions import ATP-binding protein FbpC (353 aa).

The ABC transporter domain occupies 9–239 (VTFQNVRKSF…PASSFIADFM (231 aa)). An ATP-binding site is contributed by 41 to 48 (GPSGCGKT).

The protein belongs to the ABC transporter superfamily. Fe(3+) ion importer (TC 3.A.1.10) family. In terms of assembly, the complex is composed of two ATP-binding proteins (FbpC), two transmembrane proteins (FbpB) and a solute-binding protein (FbpA).

It is found in the cell inner membrane. It carries out the reaction Fe(3+)(out) + ATP + H2O = Fe(3+)(in) + ADP + phosphate + H(+). In terms of biological role, part of the ABC transporter complex FbpABC involved in Fe(3+) ions import. Responsible for energy coupling to the transport system. The protein is Fe(3+) ions import ATP-binding protein FbpC of Rhizobium etli (strain ATCC 51251 / DSM 11541 / JCM 21823 / NBRC 15573 / CFN 42).